Reading from the N-terminus, the 421-residue chain is Histidine--tRNA ligase (421 aa).

This sequence belongs to the class-II aminoacyl-tRNA synthetase family. Homodimer.

The protein resides in the cytoplasm. It carries out the reaction tRNA(His) + L-histidine + ATP = L-histidyl-tRNA(His) + AMP + diphosphate + H(+). The polypeptide is Histidine--tRNA ligase (Ureaplasma urealyticum serovar 10 (strain ATCC 33699 / Western)).